A 750-amino-acid chain; its full sequence is Photosystem I P700 chlorophyll a apoprotein A1 (750 aa).

The next 8 helical transmembrane spans lie at 70–93 (VFSA…FHGA), 156–179 (LYCT…FHYH), 195–219 (LNHH…HVSL), 291–309 (IAHH…GHMY), 346–369 (WHAQ…HHMY), 385–411 (LSLF…IFMV), 433–455 (AIIS…LYIH), and 531–549 (FLVH…LILL). Positions 573 and 582 each coordinate [4Fe-4S] cluster. 2 helical membrane passes run 589 to 610 (HVFL…HFSW) and 664 to 686 (LSAY…MFLF). Residue His675 coordinates chlorophyll a'. Chlorophyll a-binding residues include Met683 and Tyr691. Trp692 is a phylloquinone binding site. A helical membrane pass occupies residues 724–744 (AVGVTHYLLGGIATTWAFFLA).

This sequence belongs to the PsaA/PsaB family. In terms of assembly, the PsaA/B heterodimer binds the P700 chlorophyll special pair and subsequent electron acceptors. PSI consists of a core antenna complex that captures photons, and an electron transfer chain that converts photonic excitation into a charge separation. The eukaryotic PSI reaction center is composed of at least 11 subunits. Requires P700 is a chlorophyll a/chlorophyll a' dimer, A0 is one or more chlorophyll a, A1 is one or both phylloquinones and FX is a shared 4Fe-4S iron-sulfur center. as cofactor.

It localises to the plastid. The protein resides in the chloroplast thylakoid membrane. The enzyme catalyses reduced [plastocyanin] + hnu + oxidized [2Fe-2S]-[ferredoxin] = oxidized [plastocyanin] + reduced [2Fe-2S]-[ferredoxin]. Functionally, psaA and PsaB bind P700, the primary electron donor of photosystem I (PSI), as well as the electron acceptors A0, A1 and FX. PSI is a plastocyanin-ferredoxin oxidoreductase, converting photonic excitation into a charge separation, which transfers an electron from the donor P700 chlorophyll pair to the spectroscopically characterized acceptors A0, A1, FX, FA and FB in turn. Oxidized P700 is reduced on the lumenal side of the thylakoid membrane by plastocyanin. In Draba nemorosa (Woodland whitlowgrass), this protein is Photosystem I P700 chlorophyll a apoprotein A1.